The chain runs to 161 residues: Small ribosomal subunit protein uS19 (161 aa).

Positions 1 to 19 (MARQKKYSGKGGARKKNKQ) are enriched in basic residues. Positions 1–26 (MARQKKYSGKGGARKKNKQKQNVAPR) are disordered.

The protein belongs to the universal ribosomal protein uS19 family.

Its function is as follows. Protein S19 forms a complex with S13 that binds strongly to the 16S ribosomal RNA. This chain is Small ribosomal subunit protein uS19, found in Methanococcus maripaludis (strain C5 / ATCC BAA-1333).